A 209-amino-acid polypeptide reads, in one-letter code: PF03932 family protein CutC (209 aa).

The protein localises to the cytoplasm. The protein is PF03932 family protein CutC of Streptococcus pyogenes serotype M6 (strain ATCC BAA-946 / MGAS10394).